Here is a 450-residue protein sequence, read N- to C-terminus: UDP-N-acetylmuramoylalanine--D-glutamate ligase (450 aa).

119–125 contacts ATP; sequence GSNGKTT.

The protein belongs to the MurCDEF family.

The protein localises to the cytoplasm. It carries out the reaction UDP-N-acetyl-alpha-D-muramoyl-L-alanine + D-glutamate + ATP = UDP-N-acetyl-alpha-D-muramoyl-L-alanyl-D-glutamate + ADP + phosphate + H(+). It participates in cell wall biogenesis; peptidoglycan biosynthesis. Its function is as follows. Cell wall formation. Catalyzes the addition of glutamate to the nucleotide precursor UDP-N-acetylmuramoyl-L-alanine (UMA). The chain is UDP-N-acetylmuramoylalanine--D-glutamate ligase from Bacillus cereus (strain Q1).